The primary structure comprises 313 residues: Biotin synthase (313 aa).

One can recognise a Radical SAM core domain in the interval 28–258 (NFGNDIELCS…LFPQARLRLS (231 aa)). [4Fe-4S] cluster-binding residues include C46, C50, and C53. [2Fe-2S] cluster-binding residues include C90, C121, C181, and R256.

It belongs to the radical SAM superfamily. Biotin synthase family. As to quaternary structure, homodimer. [4Fe-4S] cluster is required as a cofactor. [2Fe-2S] cluster serves as cofactor.

It catalyses the reaction (4R,5S)-dethiobiotin + (sulfur carrier)-SH + 2 reduced [2Fe-2S]-[ferredoxin] + 2 S-adenosyl-L-methionine = (sulfur carrier)-H + biotin + 2 5'-deoxyadenosine + 2 L-methionine + 2 oxidized [2Fe-2S]-[ferredoxin]. It functions in the pathway cofactor biosynthesis; biotin biosynthesis; biotin from 7,8-diaminononanoate: step 2/2. Functionally, catalyzes the conversion of dethiobiotin (DTB) to biotin by the insertion of a sulfur atom into dethiobiotin via a radical-based mechanism. In Francisella tularensis subsp. holarctica (strain FTNF002-00 / FTA), this protein is Biotin synthase.